A 138-amino-acid chain; its full sequence is Large ribosomal subunit protein bL19 (138 aa).

The protein belongs to the bacterial ribosomal protein bL19 family.

This protein is located at the 30S-50S ribosomal subunit interface and may play a role in the structure and function of the aminoacyl-tRNA binding site. This chain is Large ribosomal subunit protein bL19, found in Leptospira interrogans serogroup Icterohaemorrhagiae serovar copenhageni (strain Fiocruz L1-130).